The following is a 337-amino-acid chain: Ornithine carbamoyltransferase, catabolic (337 aa).

Residues 58–61 (STRT), Gln-85, Arg-109, and 135–138 (HPTQ) contribute to the carbamoyl phosphate site. L-ornithine contacts are provided by residues Asn-167, Asp-231, and 235–236 (SM). Residues 272–273 (CL) and Arg-317 each bind carbamoyl phosphate.

Belongs to the aspartate/ornithine carbamoyltransferase superfamily. OTCase family.

The protein localises to the cytoplasm. The catalysed reaction is carbamoyl phosphate + L-ornithine = L-citrulline + phosphate + H(+). Its pathway is amino-acid degradation; L-arginine degradation via ADI pathway; carbamoyl phosphate from L-arginine: step 2/2. Its function is as follows. Reversibly catalyzes the transfer of the carbamoyl group from carbamoyl phosphate (CP) to the N(epsilon) atom of ornithine (ORN) to produce L-citrulline. This is Ornithine carbamoyltransferase, catabolic (arcB) from Latilactobacillus sakei (Lactobacillus sakei).